A 369-amino-acid chain; its full sequence is Anhydro-N-acetylmuramic acid kinase (369 aa).

11 to 18 (GTSMDAVD) contacts ATP.

This sequence belongs to the anhydro-N-acetylmuramic acid kinase family.

The catalysed reaction is 1,6-anhydro-N-acetyl-beta-muramate + ATP + H2O = N-acetyl-D-muramate 6-phosphate + ADP + H(+). The protein operates within amino-sugar metabolism; 1,6-anhydro-N-acetylmuramate degradation. Its pathway is cell wall biogenesis; peptidoglycan recycling. In terms of biological role, catalyzes the specific phosphorylation of 1,6-anhydro-N-acetylmuramic acid (anhMurNAc) with the simultaneous cleavage of the 1,6-anhydro ring, generating MurNAc-6-P. Is required for the utilization of anhMurNAc either imported from the medium or derived from its own cell wall murein, and thus plays a role in cell wall recycling. The polypeptide is Anhydro-N-acetylmuramic acid kinase (Idiomarina loihiensis (strain ATCC BAA-735 / DSM 15497 / L2-TR)).